A 454-amino-acid chain; its full sequence is MKFFDTIVSPATVIGRSGIGIIRISGISVLKIIKKFLKISMKERFAYFSSFYDVKNNLLDQGIALFFLAPKSFTGENILEFHSHGNPIILDLLIKNILTIKNVRIANPGEFSKRAFLNNKIDLVQAEAINDIINAESHLSVKAALSSLRGTFSKKINKILFNLKDIYSEIEAIINFPEELNDLNIQKNIKKKLSFIIKMITNLLDETHKNYIFSNTIKIVIAGPPNVGKSSLLNFLSKEKVSIVTNIPGTTRDVIHKNIWFNGVCCEFLDTAGLQKSQDIIEVIGIKLAKKHIKSCNHIFLMFDVTKKKMINNNFIKNIVNNLKKNQNITFIFNKIDLINKKPYISIIYKKFECIYLSLKKNIGIEYLKNKILEITTLHNNVESTFLAKKRHISALKKSLMYLINGKRNWMKNLYLELLSDDIRLSIKYLLKITGKFNSEDLLDKIFSKFCIGK.

Arginine 23, glutamate 80, and lysine 120 together coordinate (6S)-5-formyl-5,6,7,8-tetrahydrofolate. In terms of domain architecture, TrmE-type G spans 216–377; the sequence is TIKIVIAGPP…LKNKILEITT (162 aa). Asparagine 226 contributes to the K(+) binding site. Residues 226 to 231, 245 to 251, and 270 to 273 contribute to the GTP site; these read NVGKSS, TNIPGTT, and DTAG. Position 230 (serine 230) interacts with Mg(2+). K(+)-binding residues include threonine 245, isoleucine 247, and threonine 250. Threonine 251 contacts Mg(2+). Lysine 454 provides a ligand contact to (6S)-5-formyl-5,6,7,8-tetrahydrofolate.

This sequence belongs to the TRAFAC class TrmE-Era-EngA-EngB-Septin-like GTPase superfamily. TrmE GTPase family. In terms of assembly, homodimer. Heterotetramer of two MnmE and two MnmG subunits. K(+) is required as a cofactor.

Its subcellular location is the cytoplasm. Exhibits a very high intrinsic GTPase hydrolysis rate. Involved in the addition of a carboxymethylaminomethyl (cmnm) group at the wobble position (U34) of certain tRNAs, forming tRNA-cmnm(5)s(2)U34. The chain is tRNA modification GTPase MnmE from Buchnera aphidicola subsp. Cinara cedri (strain Cc).